The primary structure comprises 389 residues: Phospho-N-acetylmuramoyl-pentapeptide-transferase (389 aa).

A run of 10 helical transmembrane segments spans residues 25–45 (RAVM…PWVI), 73–93 (TMGG…WGDL), 97–117 (FIWI…VDDY), 135–155 (FWQS…VSEA), 190–210 (ISYP…IVGA), 222–242 (GLVI…AYVM), 258–278 (GAGE…AFLW), 286–306 (VFMG…VAVI), 311–331 (IVLF…MLQV), and 366–386 (QVVV…LSTL).

This sequence belongs to the glycosyltransferase 4 family. MraY subfamily. The cofactor is Mg(2+).

The protein resides in the cell inner membrane. It catalyses the reaction UDP-N-acetyl-alpha-D-muramoyl-L-alanyl-gamma-D-glutamyl-meso-2,6-diaminopimeloyl-D-alanyl-D-alanine + di-trans,octa-cis-undecaprenyl phosphate = di-trans,octa-cis-undecaprenyl diphospho-N-acetyl-alpha-D-muramoyl-L-alanyl-D-glutamyl-meso-2,6-diaminopimeloyl-D-alanyl-D-alanine + UMP. It functions in the pathway cell wall biogenesis; peptidoglycan biosynthesis. Its function is as follows. Catalyzes the initial step of the lipid cycle reactions in the biosynthesis of the cell wall peptidoglycan: transfers peptidoglycan precursor phospho-MurNAc-pentapeptide from UDP-MurNAc-pentapeptide onto the lipid carrier undecaprenyl phosphate, yielding undecaprenyl-pyrophosphoryl-MurNAc-pentapeptide, known as lipid I. The polypeptide is Phospho-N-acetylmuramoyl-pentapeptide-transferase (Burkholderia pseudomallei (strain 1106a)).